An 88-amino-acid polypeptide reads, in one-letter code: Small ribosomal subunit protein uS17 (88 aa).

Belongs to the universal ribosomal protein uS17 family. In terms of assembly, part of the 30S ribosomal subunit.

One of the primary rRNA binding proteins, it binds specifically to the 5'-end of 16S ribosomal RNA. This chain is Small ribosomal subunit protein uS17, found in Azotobacter vinelandii (strain DJ / ATCC BAA-1303).